The chain runs to 344 residues: Phosphoribosylformylglycinamidine cyclo-ligase (344 aa).

The protein belongs to the AIR synthase family.

The protein resides in the cytoplasm. It catalyses the reaction 2-formamido-N(1)-(5-O-phospho-beta-D-ribosyl)acetamidine + ATP = 5-amino-1-(5-phospho-beta-D-ribosyl)imidazole + ADP + phosphate + H(+). The protein operates within purine metabolism; IMP biosynthesis via de novo pathway; 5-amino-1-(5-phospho-D-ribosyl)imidazole from N(2)-formyl-N(1)-(5-phospho-D-ribosyl)glycinamide: step 2/2. This chain is Phosphoribosylformylglycinamidine cyclo-ligase, found in Laribacter hongkongensis (strain HLHK9).